The following is a 322-amino-acid chain: Cytochrome c biogenesis protein CcsA (322 aa).

Transmembrane regions (helical) follow at residues 19–39 (NAIF…LIIV), 43–63 (LICN…FFYL), 72–92 (FFPL…LLFI), 104–124 (VIGA…SLSL), 150–170 (MMLS…YLVL), 230–250 (TIGI…VWAN), 264–281 (TWAL…HARL), and 291–311 (AFLG…VNFL).

It belongs to the CcmF/CycK/Ccl1/NrfE/CcsA family. As to quaternary structure, may interact with Ccs1.

Its subcellular location is the plastid. The protein resides in the chloroplast thylakoid membrane. In terms of biological role, required during biogenesis of c-type cytochromes (cytochrome c6 and cytochrome f) at the step of heme attachment. This Heterosigma akashiwo (strain NIES-293 / 8280G21-1) protein is Cytochrome c biogenesis protein CcsA.